A 347-amino-acid chain; its full sequence is Two pore potassium channel a (347 aa).

Polar residues predominate over residues 1 to 11 (MDDNSIQQSLL). Positions 1 to 49 (MDDNSIQQSLLADNPNVLQRKPSEGVNRFRRCRSTPSTDPLQGPPEKGS) are disordered. Residues 1–65 (MDDNSIQQSL…LFKEMRPSFR (65 aa)) lie on the Cytoplasmic side of the membrane. The chain crosses the membrane as a helical span at residues 66–86 (LVGLLLFIYLLVGVLAFYAVM). The segment at residues 99 to 118 (DALYFCVVTMTTVGYGDLVP) is an intramembrane region (pore-forming). Residues 125–145 (LLACAFVFMGMAVVALFVSKV) traverse the membrane as a helical segment. Over 146–183 (ADYLVEKQEVLFFKALHTNLKGGETKMLRAIETNRIKY) the chain is Cytoplasmic. Residues 184–204 (KFYTNALLLVLSIISGTVFLW) form a helical membrane-spanning segment. Residues 213-232 (DSFYCVCATITTLGYGDKSF) constitute an intramembrane region (pore-forming). Residues 239–259 (VFAVFWIITSTIIMAQFFMYL) traverse the membrane as a helical segment. The Cytoplasmic portion of the chain corresponds to 260-347 (AEIYTERRQK…YDLTLAQSAQ (88 aa)). EF-hand domains are found at residues 276 to 311 (LTRK…ELGK) and 315 to 347 (EEIS…QSAQ). The Ca(2+) site is built by Asp-289, Asp-291, Asp-293, Gln-295, Glu-300, Asp-328, Asp-330, Ser-332, Thr-334, and Asp-339.

It belongs to the two pore domain potassium channel (TC 1.A.1.7) family. In terms of assembly, homodimer.

It localises to the vacuole membrane. Its function is as follows. Highly selective inward-rectifying potassium channel that is specifically located in the tonoplast of large vacuoles. Functions independently of the voltage difference across the membrane. In Oryza sativa subsp. japonica (Rice), this protein is Two pore potassium channel a (TPKA).